Consider the following 332-residue polypeptide: Anthranilate phosphoribosyltransferase (332 aa).

Residues G79, 82–83 (GD), S87, 89–92 (NIST), 107–115 (KHGNRSVSS), and S119 each bind 5-phospho-alpha-D-ribose 1-diphosphate. G79 contributes to the anthranilate binding site. Mg(2+) is bound at residue S91. N110 is a binding site for anthranilate. Anthranilate is bound at residue R165. Residues D223 and E224 each contribute to the Mg(2+) site.

It belongs to the anthranilate phosphoribosyltransferase family. As to quaternary structure, homodimer. It depends on Mg(2+) as a cofactor.

It catalyses the reaction N-(5-phospho-beta-D-ribosyl)anthranilate + diphosphate = 5-phospho-alpha-D-ribose 1-diphosphate + anthranilate. Its pathway is amino-acid biosynthesis; L-tryptophan biosynthesis; L-tryptophan from chorismate: step 2/5. Its function is as follows. Catalyzes the transfer of the phosphoribosyl group of 5-phosphorylribose-1-pyrophosphate (PRPP) to anthranilate to yield N-(5'-phosphoribosyl)-anthranilate (PRA). The protein is Anthranilate phosphoribosyltransferase of Serratia proteamaculans (strain 568).